Consider the following 247-residue polypeptide: TLC domain-containing protein 1 (247 aa).

The first 27 residues, 1–27 (MPLLFHPAWPLLLGATLTFRALRRVLC), serve as a signal peptide directing secretion. The Extracellular segment spans residues 28–46 (RLPQPAHVQTDPLRTWRWH). The region spanning 40-234 (LRTWRWHNLL…LLRSDFCPER (195 aa)) is the TLC domain. The chain crosses the membrane as a helical span at residues 47-67 (NLLVSFTHSIVSGIWALLCLW). The Cytoplasmic segment spans residues 68-83 (QTPEMLVEIETAWSAS). Residues 84 to 104 (GYLLVCFSAGYFIHDTVDIVV) traverse the membrane as a helical segment. Over 105 to 123 (SKQTRASWEYLVHHVMAMG) the chain is Extracellular. Positions 124-144 (AFFSGIFWKRFVGGGVLTLLV) form an intramembrane region, helical. At 145 to 173 (EVSNIFLTLRMMMKINNAQDLLLYKVNKY) the chain is on the extracellular side. A helical membrane pass occupies residues 174–194 (INLVMYFLFRLAPQAYLTKFF). At 195 to 201 (LQYAGQR) the chain is on the cytoplasmic side. Residues 202–222 (TLGTFLLAILLMLDLMIIIYF) traverse the membrane as a helical segment. The Extracellular portion of the chain corresponds to 223-247 (SRLLRSDFCPERAPRRQQKDKFLTE).

It localises to the cell membrane. Functionally, regulates the composition and fluidity of the plasma membrane. Inhibits the incorporation of membrane-fluidizing phospholipids containing omega-3 long-chain polyunsaturated fatty acids (LCPUFA) and thereby promotes membrane rigidity. Does not appear to have any effect on LCPUFA synthesis. This chain is TLC domain-containing protein 1 (Tlcd1), found in Mus musculus (Mouse).